Here is a 784-residue protein sequence, read N- to C-terminus: E3 UFM1-protein ligase 1 homolog (784 aa).

Residues 398–414 (QEVDHGVMEEEKADKRE) show a composition bias toward basic and acidic residues. Residues 398 to 472 (QEVDHGVMEE…ASNKKGGKDP (75 aa)) are disordered.

The protein belongs to the UFL1 family.

In terms of biological role, E3 UFM1-protein ligase that mediates ufmylation of target proteins. This chain is E3 UFM1-protein ligase 1 homolog, found in Anopheles gambiae (African malaria mosquito).